The following is a 96-amino-acid chain: UPF0251 protein Ssed_3913 (96 aa).

This sequence belongs to the UPF0251 family.

This Shewanella sediminis (strain HAW-EB3) protein is UPF0251 protein Ssed_3913.